The primary structure comprises 616 residues: Homeodomain-interacting protein kinase 4 (616 aa).

The Protein kinase domain occupies 11–347 (YDIIEVLGKG…PSAALRHPFV (337 aa)). ATP contacts are provided by residues 17-25 (LGKGTFGEV) and Lys-40. The active-site Proton acceptor is the Asp-136. The tract at residues 485 to 616 (RHKARKPPAG…SFLQHVTGHH (132 aa)) is disordered. The segment covering 496 to 511 (KSDSNLSNLIRLSQVS) has biased composition (polar residues). Ser-511 is modified (phosphoserine).

This sequence belongs to the protein kinase superfamily. CMGC Ser/Thr protein kinase family. HIPK subfamily. In terms of processing, autophosphorylated.

It localises to the cytoplasm. It catalyses the reaction L-seryl-[protein] + ATP = O-phospho-L-seryl-[protein] + ADP + H(+). The catalysed reaction is L-threonyl-[protein] + ATP = O-phospho-L-threonyl-[protein] + ADP + H(+). Its function is as follows. Protein kinase that phosphorylates TP53, and thus induces TP53 repression of BIRC5 promoter. May act as a corepressor of transcription factors (Potential). This is Homeodomain-interacting protein kinase 4 (HIPK4) from Macaca fascicularis (Crab-eating macaque).